Here is a 365-residue protein sequence, read N- to C-terminus: Potassium channel subfamily K member 9 (365 aa).

The Cytoplasmic segment spans residues Met1–Thr8. The helical transmembrane segment at Leu9 to Leu29 threads the bilayer. The Extracellular portion of the chain corresponds to Glu30 to Ile88. A glycan (N-linked (GlcNAc...) asparagine) is linked at Asn53. Residues Thr89–Pro101 constitute an intramembrane region (pore-forming). Thr93, Ile94, Gly95, and Tyr96 together coordinate K(+). The tract at residues Thr93–His98 is selectivity filter 1. Residues Gly102–Lys107 are Extracellular-facing. A helical transmembrane segment spans residues Ala108–Leu128. The Cytoplasmic portion of the chain corresponds to Gly129–Asn158. Residues Met159 to Ser179 traverse the membrane as a helical segment. Residues Gln180–Phe194 lie on the Extracellular side of the membrane. An intramembrane region (pore-forming) is located at residues Ile195 to Ala207. Thr199, Ile200, Gly201, and Phe202 together coordinate K(+). The segment at Thr199–Asp204 is selectivity filter 2. Topologically, residues Leu208 to Pro218 are extracellular. A helical transmembrane segment spans residues Phe219–Leu239. Topologically, residues Asn240–Val365 are cytoplasmic. Positions Val243 to Thr248 are X-gate.

This sequence belongs to the two pore domain potassium channel (TC 1.A.1.8) family. Homodimer. Heterodimer with KCNK1. Heterodimer with KCNK3. As to expression, highly expressed in the brain.

The protein resides in the cell membrane. It is found in the mitochondrion inner membrane. The protein localises to the cell projection. It localises to the dendrite. It catalyses the reaction K(+)(in) = K(+)(out). It carries out the reaction Na(+)(in) = Na(+)(out). With respect to regulation, inhibited by extracellular acidification. K(+) channel that conducts voltage-dependent outward rectifying currents upon membrane depolarization. Voltage sensing is coupled to K(+) electrochemical gradient in an 'ion flux gating' mode where outward but not inward ion flow opens the gate. Changes ion selectivity and becomes permeable to Na(+) ions in response to extracellular acidification. Protonation of the pH sensor His-98 stabilizes C-type inactivation conformation likely converting the channel from outward K(+)-conducting, to inward Na(+)-conducting to nonconductive state. Homo- and heterodimerizes to form functional channels with distinct regulatory and gating properties. Allows K(+) currents with fast-gating kinetics important for the repolarization and hyperpolarization phases of action potentials. In granule neurons, hyperpolarizes the resting membrane potential to limit intrinsic neuronal excitability, but once the action potential threshold is reached, supports high-frequency action potential firing and increased neuronal excitability. Homomeric and/or heteromeric KCNK3:KCNK9 channels operate in cerebellar granule cells, whereas heteromeric KCNK1:KCNK9 enables currents in hippocampal dentate gyrus granule neurons. Dispensable for central chemosensory respiration i.e. breathing controlled by brainstem CO2/pH, it rather conducts pH-sensitive currents and controls the firing rate of serotonergic raphe neurons involved in potentiation of the respiratory chemoreflex. In retinal ganglion cells, mediates outward rectifying currents that regulate action potentials in response to acidification of the synaptic cleft. Involved in transmission of image-forming and nonimage-forming visual information in the retina. In adrenal gland, contributes to the maintenance of a hyperpolarized resting membrane potential of aldosterone-producing cells at zona glomerulosa and limits aldosterone release as part of a regulatory mechanism that controls arterial blood pressure and electrolyte homeostasis. In Cavia porcellus (Guinea pig), this protein is Potassium channel subfamily K member 9 (KCNK9).